Here is a 307-residue protein sequence, read N- to C-terminus: Putative oxidoreductase YceM (307 aa).

The protein belongs to the Gfo/Idh/MocA family.

This chain is Putative oxidoreductase YceM (yceM), found in Escherichia coli (strain K12).